The primary structure comprises 397 residues: Tryptophan synthase beta chain (397 aa).

Lys-87 bears the N6-(pyridoxal phosphate)lysine mark.

The protein belongs to the TrpB family. Tetramer of two alpha and two beta chains. The cofactor is pyridoxal 5'-phosphate.

The catalysed reaction is (1S,2R)-1-C-(indol-3-yl)glycerol 3-phosphate + L-serine = D-glyceraldehyde 3-phosphate + L-tryptophan + H2O. The protein operates within amino-acid biosynthesis; L-tryptophan biosynthesis; L-tryptophan from chorismate: step 5/5. Its function is as follows. The beta subunit is responsible for the synthesis of L-tryptophan from indole and L-serine. The sequence is that of Tryptophan synthase beta chain from Escherichia coli O157:H7.